The sequence spans 329 residues: Methionyl-tRNA formyltransferase (329 aa).

Position 118 to 121 (S118 to P121) interacts with (6S)-5,6,7,8-tetrahydrofolate.

It belongs to the Fmt family.

The enzyme catalyses L-methionyl-tRNA(fMet) + (6R)-10-formyltetrahydrofolate = N-formyl-L-methionyl-tRNA(fMet) + (6S)-5,6,7,8-tetrahydrofolate + H(+). Its function is as follows. Attaches a formyl group to the free amino group of methionyl-tRNA(fMet). The formyl group appears to play a dual role in the initiator identity of N-formylmethionyl-tRNA by promoting its recognition by IF2 and preventing the misappropriation of this tRNA by the elongation apparatus. In Corynebacterium urealyticum (strain ATCC 43042 / DSM 7109), this protein is Methionyl-tRNA formyltransferase.